A 621-amino-acid chain; its full sequence is Chaperone protein HtpG (621 aa).

Residues 1 to 328 form an a; substrate-binding region; the sequence is MKQEKKKFDA…SEDLPLNISR (328 aa). The tract at residues 329–544 is b; sequence ESLQHNNVLE…EAAMDIRMER (216 aa). Residues 478–498 are disordered; that stretch reads DVDQATSSSEEKNKDDKKSDD. The segment covering 486-498 has biased composition (basic and acidic residues); it reads SEEKNKDDKKSDD. The c stretch occupies residues 545 to 621; it reads FLIEQKQIAN…LNDIVQKAIL (77 aa).

The protein belongs to the heat shock protein 90 family. As to quaternary structure, homodimer.

The protein resides in the cytoplasm. Functionally, molecular chaperone. Has ATPase activity. This is Chaperone protein HtpG from Rickettsia bellii (strain RML369-C).